Consider the following 109-residue polypeptide: Beta-keratin-related protein (109 aa).

S2 carries the post-translational modification N-acetylserine.

It belongs to the avian keratin family.

This Coturnix japonica (Japanese quail) protein is Beta-keratin-related protein (BKJ).